Reading from the N-terminus, the 592-residue chain is UvrABC system protein C (592 aa).

One can recognise a GIY-YIG domain in the interval 15-92; that stretch reads ALPGCYLMKD…IQKHQPYFNI (78 aa). Residues 197 to 232 form the UVR domain; the sequence is DNVKKDLTEKMATAAQEMQFERAAELRDQLRYIEAT.

It belongs to the UvrC family. In terms of assembly, interacts with UvrB in an incision complex.

It localises to the cytoplasm. In terms of biological role, the UvrABC repair system catalyzes the recognition and processing of DNA lesions. UvrC both incises the 5' and 3' sides of the lesion. The N-terminal half is responsible for the 3' incision and the C-terminal half is responsible for the 5' incision. The polypeptide is UvrABC system protein C (Latilactobacillus sakei subsp. sakei (strain 23K) (Lactobacillus sakei subsp. sakei)).